Here is a 409-residue protein sequence, read N- to C-terminus: Protein naked cuticle homolog 2 (409 aa).

Glycine 2 carries the N-myristoyl glycine lipid modification. The EF-hand domain maps to 109–144; the sequence is AEDNRQEWVFTLYDFDNSGKVTKEDMSSLMHTIYDV. Ca(2+) is bound by residues aspartate 122, aspartate 124, serine 126, lysine 128, and aspartate 133. Disordered stretches follow at residues 160–224, 243–315, 346–366, and 388–409; these read LRVK…YCVD, TSRF…RYPG, SHTH…RIRS, and RHEH…YHQT. Basic and acidic residues-rich tracts occupy residues 171 to 185 and 193 to 224; these read AARR…RETS and VRSE…YCVD. The segment covering 247–268 has biased composition (low complexity); sequence DSSSPDADQDPPSRSSHSQSRP. The segment covering 389–409 has biased composition (basic residues); that stretch reads HEHHHHHEHHHHHHYHHYHQT.

This sequence belongs to the NKD family. As to expression, expressed ubiquitously until 1 dpf, when expression becomes confined to the anterior CNS, with slight expression in the developing tail.

Its subcellular location is the cell membrane. It is found in the cytoplasm. Its function is as follows. Cell autonomous antagonist of both the canonical and non-canonical Wnt signaling pathways. In Danio rerio (Zebrafish), this protein is Protein naked cuticle homolog 2 (nkd2).